Reading from the N-terminus, the 564-residue chain is Eukaryotic translation initiation factor 3 subunit L (564 aa).

In terms of domain architecture, PCI spans 331-537 (DAIRVFANIL…IHIADTKVAR (207 aa)).

The protein belongs to the eIF-3 subunit L family. In terms of assembly, component of the eukaryotic translation initiation factor 3 (eIF-3) complex, which is composed of 13 subunits: EIF3A, EIF3B, EIF3C, EIF3D, EIF3E, EIF3F, EIF3G, EIF3H, EIF3I, EIF3J, EIF3K, EIF3L and EIF3M.

It is found in the cytoplasm. Component of the eukaryotic translation initiation factor 3 (eIF-3) complex, which is involved in protein synthesis of a specialized repertoire of mRNAs and, together with other initiation factors, stimulates binding of mRNA and methionyl-tRNAi to the 40S ribosome. The eIF-3 complex specifically targets and initiates translation of a subset of mRNAs involved in cell proliferation. The protein is Eukaryotic translation initiation factor 3 subunit L of Gallus gallus (Chicken).